The following is a 164-amino-acid chain: Protein SprT (164 aa).

The 143-residue stretch at Gln14 to Val156 folds into the SprT-like domain. His69 is a binding site for Zn(2+). Glu70 is an active-site residue. His73 contacts Zn(2+).

It belongs to the SprT family. Requires Zn(2+) as cofactor.

The protein localises to the cytoplasm. The sequence is that of Protein SprT from Pseudomonas fluorescens (strain ATCC BAA-477 / NRRL B-23932 / Pf-5).